Here is a 124-residue protein sequence, read N- to C-terminus: Small ribosomal subunit protein bS6 (124 aa).

Positions 96–124 (ETGPSPMMKEVQREEAKKAAAAQPTEAQA) are disordered. Low complexity predominate over residues 114 to 124 (AAAAQPTEAQA).

Belongs to the bacterial ribosomal protein bS6 family.

Functionally, binds together with bS18 to 16S ribosomal RNA. This is Small ribosomal subunit protein bS6 from Burkholderia vietnamiensis (strain G4 / LMG 22486) (Burkholderia cepacia (strain R1808)).